Consider the following 450-residue polypeptide: Neutral protease 2 homolog AFUB_070680 (450 aa).

A signal peptide spans 1 to 19; that stretch reads MKITALASAILAVAQGALA. Positions 20–172 are excised as a propeptide; it reads LPARAPALDI…PASIKPLDRR (153 aa). 2 disulfides stabilise this stretch: C179–C251 and C258–C276. Residue H300 participates in Zn(2+) binding. The active site involves E301. H304 and D315 together coordinate Zn(2+). Over residues 364-392 the composition is skewed to polar residues; the sequence is QPGQTEPGTQTMWDGYSQPGQTEPGTQTM. Residues 364 to 416 are disordered; it reads QPGQTEPGTQTMWDGYSQPGQTEPGTQTMWDGYSQPGQTEPGTQTTWDGYSQP. Residues 398 to 409 are compositionally biased toward low complexity; the sequence is QPGQTEPGTQTT.

It belongs to the peptidase M35 family. It depends on Zn(2+) as a cofactor.

The protein localises to the secreted. It catalyses the reaction Preferential cleavage of bonds with hydrophobic residues in P1'. Also 3-Asn-|-Gln-4 and 8-Gly-|-Ser-9 bonds in insulin B chain.. Secreted metalloproteinase that allows assimilation of proteinaceous substrates. Shows high activities on basic nuclear substrates such as histone and protamine. May be involved in virulence. This Aspergillus fumigatus (strain ATCC MYA-4609 / CBS 101355 / FGSC A1100 / Af293) (Neosartorya fumigata) protein is Neutral protease 2 homolog AFUB_070680.